Reading from the N-terminus, the 322-residue chain is Chemokine XC receptor 1 (322 aa).

Over 1–27 the chain is Extracellular; sequence MESSTAFYDYHDKLSLLCENNVIFFST. A helical membrane pass occupies residues 28–55; it reads ISTIVLYSLVFLLSLVGNSLVLWVLVKY. The Cytoplasmic segment spans residues 56–65; sequence ENLESLTNIF. A helical membrane pass occupies residues 66–85; the sequence is ILNLCLSDLMFSCLLPVLIS. Residues 86-98 lie on the Extracellular side of the membrane; it reads AQWSWFLGDFFCK. The cysteines at positions 97 and 170 are disulfide-linked. Residues 99–120 form a helical membrane-spanning segment; that stretch reads FFNMIFGISLYSSIFFLTIMTI. Residues 121–137 lie on the Cytoplasmic side of the membrane; the sequence is HRYLSVVSPISTLGIHT. Residues 138–162 traverse the membrane as a helical segment; it reads LRCRVLVTSCVWAASILFSIPDAVF. At 163-185 the chain is on the extracellular side; sequence HKVISLNCKYSEHHGFLASVYQH. Residues 186–204 traverse the membrane as a helical segment; sequence NIFFLLSMGIILFCYVQIL. The Cytoplasmic segment spans residues 205-220; that stretch reads RTLFRTRSRQRHRTVR. Residues 221–243 form a helical membrane-spanning segment; it reads LIFTVVVAYFLSWAPYNLTLFLK. The Extracellular portion of the chain corresponds to 244-259; it reads TGIIQQSCESLQQLDI. Residues 260-283 form a helical membrane-spanning segment; that stretch reads AMIICRHLAFSHCCFNPVLYVFVG. Topologically, residues 284–322 are cytoplasmic; that stretch reads IKFRRHLKHLFQQVWLCRKTSSTVPCSPGTFTYEGPSFY.

Belongs to the G-protein coupled receptor 1 family. In terms of tissue distribution, expressed by dendritic cells from the thymus, slpeen, subcutaneous lymph nodes and mesenteric lymph nodes.

It localises to the cell membrane. Its function is as follows. Receptor for chemokines SCYC1 and SCYC2. Subsequently transduces a signal by increasing the intracellular calcium ions level. Receptor for XCL1/Lymphotactin. The chain is Chemokine XC receptor 1 (Xcr1) from Mus musculus (Mouse).